A 1119-amino-acid chain; its full sequence is Period circadian protein homolog 3 (1119 aa).

Residues 1 to 48 (MDPCGNPAVPGGDCPQTRGPGLQGSSGQEGPLQGICVDSSHSEHEDRN) are disordered. The Nuclear export signal 1 signature appears at 54 to 63 (LIMVVQEMKK). PAS domains lie at 120–187 (LASE…PTQL) and 259–325 (YEAP…KVLK). The 44-residue stretch at 334–377 (HSPIRFCTQNGDYVILDSSWSSFVNPWSRKVSFIIGRHKVRTSP) folds into the PAC domain. A Nuclear export signal 3 motif is present at residues 400–409 (LQEQIHRLLL). Over residues 419 to 428 (GYGSLGSSGS) the composition is skewed to low complexity. 4 disordered regions span residues 419–449 (GYGS…VEEA), 483–530 (VKPV…SSSY), 718–744 (HSRC…SSSS), and 878–910 (LEPT…SRSS). Polar residues-rich tracts occupy residues 429–442 (QEQH…SESS) and 491–515 (TEPQ…STDT). A CSNK1E binding domain region spans residues 551-750 (LKRKCISCTN…SSSSAHLCPH (200 aa)). The Nuclear localization signal signature appears at 720 to 739 (RCAGSERRKHKRKKLPTPVD). Basic and acidic residues predominate over residues 885 to 903 (HGPRRVEENWETHSEEEHP). Ser907 is subject to Phosphoserine. The Nuclear export signal 2 motif lies at 913–920 (LQLNLLQE). The disordered stretch occupies residues 947–1011 (GNSGSRSPPC…QDTHRDRAFS (65 aa)). Over residues 970 to 988 (SPSAAASGSSASSVHGSGS) the composition is skewed to low complexity. The segment covering 989–1001 (DYTSEVSENGQRS) has biased composition (polar residues). The segment at 1037 to 1119 (ERGRDTVLRE…VQQKTPVEQL (83 aa)) is CRY binding domain.

In terms of assembly, homodimer. Component of the circadian core oscillator, which includes the CRY proteins, CLOCK or NPAS2, BMAL1 or BMAL2, CSNK1D and/or CSNK1E, TIMELESS and the PER proteins. Interacts directly with PER1, PER2, CRY1, CRY2, and TIMELESS; interaction with CRY1 and CRY2 is weak and not rhythmic. Interacts with FBXW11 and BTRC. Phosphorylation by CSNK1E is weak and appears to require association with PER1 and translocation to the nucleus. Post-translationally, ubiquitinated.

The protein localises to the cytoplasm. Its subcellular location is the nucleus. Originally described as a core component of the circadian clock. The circadian clock, an internal time-keeping system, regulates various physiological processes through the generation of approximately 24 hour circadian rhythms in gene expression, which are translated into rhythms in metabolism and behavior. It is derived from the Latin roots 'circa' (about) and 'diem' (day) and acts as an important regulator of a wide array of physiological functions including metabolism, sleep, body temperature, blood pressure, endocrine, immune, cardiovascular, and renal function. Consists of two major components: the central clock, residing in the suprachiasmatic nucleus (SCN) of the brain, and the peripheral clocks that are present in nearly every tissue and organ system. Both the central and peripheral clocks can be reset by environmental cues, also known as Zeitgebers (German for 'timegivers'). The predominant Zeitgeber for the central clock is light, which is sensed by retina and signals directly to the SCN. The central clock entrains the peripheral clocks through neuronal and hormonal signals, body temperature and feeding-related cues, aligning all clocks with the external light/dark cycle. Circadian rhythms allow an organism to achieve temporal homeostasis with its environment at the molecular level by regulating gene expression to create a peak of protein expression once every 24 hours to control when a particular physiological process is most active with respect to the solar day. Transcription and translation of core clock components (CLOCK, NPAS2, BMAL1, BMAL2, PER1, PER2, PER3, CRY1 and CRY2) plays a critical role in rhythm generation, whereas delays imposed by post-translational modifications (PTMs) are important for determining the period (tau) of the rhythms (tau refers to the period of a rhythm and is the length, in time, of one complete cycle). A diurnal rhythm is synchronized with the day/night cycle, while the ultradian and infradian rhythms have a period shorter and longer than 24 hours, respectively. Disruptions in the circadian rhythms contribute to the pathology of cardiovascular diseases, cancer, metabolic syndromes and aging. A transcription/translation feedback loop (TTFL) forms the core of the molecular circadian clock mechanism. Transcription factors, CLOCK or NPAS2 and BMAL1 or BMAL2, form the positive limb of the feedback loop, act in the form of a heterodimer and activate the transcription of core clock genes and clock-controlled genes (involved in key metabolic processes), harboring E-box elements (5'-CACGTG-3') within their promoters. The core clock genes: PER1/2/3 and CRY1/2 which are transcriptional repressors form the negative limb of the feedback loop and interact with the CLOCK|NPAS2-BMAL1|BMAL2 heterodimer inhibiting its activity and thereby negatively regulating their own expression. This heterodimer also activates nuclear receptors NR1D1, NR1D2, RORA, RORB and RORG, which form a second feedback loop and which activate and repress BMAL1 transcription, respectively. Has a redundant role with the other PER proteins PER1 and PER2 and is not essential for the circadian rhythms maintenance. In contrast, plays an important role in sleep-wake timing and sleep homeostasis probably through the transcriptional regulation of sleep homeostasis-related genes, without influencing circadian parameters. Can bind heme. In Rattus norvegicus (Rat), this protein is Period circadian protein homolog 3 (Per3).